A 454-amino-acid chain; its full sequence is Mitochondrial distribution and morphology protein 10 (454 aa).

It belongs to the MDM10 family. Component of the ER-mitochondria encounter structure (ERMES) or MDM complex, composed of MMM1, MDM10, MDM12 and MDM34. Associates with the mitochondrial outer membrane sorting assembly machinery SAM(core) complex.

Its subcellular location is the mitochondrion outer membrane. In terms of biological role, component of the ERMES/MDM complex, which serves as a molecular tether to connect the endoplasmic reticulum and mitochondria. Components of this complex are involved in the control of mitochondrial shape and protein biogenesis and may function in phospholipid exchange. MDM10 is involved in the late assembly steps of the general translocase of the mitochondrial outer membrane (TOM complex). Functions in the TOM40-specific route of the assembly of outer membrane beta-barrel proteins, including the association of TOM40 with the receptor TOM22 and small TOM proteins. Can associate with the SAM(core) complex as well as the MDM12-MMM1 complex, both involved in late steps of the major beta-barrel assembly pathway, that is responsible for biogenesis of all outer membrane beta-barrel proteins. May act as a switch that shuttles between both complexes and channels precursor proteins into the TOM40-specific pathway. Plays a role in mitochondrial morphology and in the inheritance of mitochondria. This Candida tropicalis (strain ATCC MYA-3404 / T1) (Yeast) protein is Mitochondrial distribution and morphology protein 10.